A 229-amino-acid polypeptide reads, in one-letter code: Large ribosomal subunit protein uL1 (229 aa).

Belongs to the universal ribosomal protein uL1 family. Part of the 50S ribosomal subunit.

Its function is as follows. Binds directly to 23S rRNA. The L1 stalk is quite mobile in the ribosome, and is involved in E site tRNA release. Protein L1 is also a translational repressor protein, it controls the translation of the L11 operon by binding to its mRNA. In Chlorobium phaeobacteroides (strain DSM 266 / SMG 266 / 2430), this protein is Large ribosomal subunit protein uL1.